Here is a 201-residue protein sequence, read N- to C-terminus: 3-isopropylmalate dehydratase small subunit (201 aa).

It belongs to the LeuD family. LeuD type 1 subfamily. As to quaternary structure, heterodimer of LeuC and LeuD.

The enzyme catalyses (2R,3S)-3-isopropylmalate = (2S)-2-isopropylmalate. The protein operates within amino-acid biosynthesis; L-leucine biosynthesis; L-leucine from 3-methyl-2-oxobutanoate: step 2/4. Catalyzes the isomerization between 2-isopropylmalate and 3-isopropylmalate, via the formation of 2-isopropylmaleate. The chain is 3-isopropylmalate dehydratase small subunit from Parvibaculum lavamentivorans (strain DS-1 / DSM 13023 / NCIMB 13966).